The chain runs to 146 residues: Deoxyuridine 5'-triphosphate nucleotidohydrolase (146 aa).

Residues 66 to 68, N79, 83 to 85, and K93 each bind substrate; these read RSG and TID.

The protein belongs to the dUTPase family. It depends on Mg(2+) as a cofactor.

It catalyses the reaction dUTP + H2O = dUMP + diphosphate + H(+). Its pathway is pyrimidine metabolism; dUMP biosynthesis; dUMP from dCTP (dUTP route): step 2/2. Its function is as follows. This enzyme is involved in nucleotide metabolism: it produces dUMP, the immediate precursor of thymidine nucleotides and it decreases the intracellular concentration of dUTP so that uracil cannot be incorporated into DNA. The chain is Deoxyuridine 5'-triphosphate nucleotidohydrolase from Zymomonas mobilis subsp. mobilis (strain ATCC 31821 / ZM4 / CP4).